A 456-amino-acid chain; its full sequence is MFLLLPFDSLIVNLLGISLTVLFTLLLVFIIVPAIFGVSFGIRKLYMKSLLKIFAWATLRMERGAKEKNHQLYKPYTNGIIAKDPTSLEEEIKEIRRSGSSKALDNTPEFELSDIFYFCRKGMETIMDDEVTKRFSAEELESWNLLSRTNYNFQYISLRLTVLWGLGVLIRYCFLLPLRIALAFTGISLLVVGTTVVGYLPNGRFKEFMSKHVHLMCYRICVRALTAIITYHDRENRPRNGGICVANHTSPIDVIILASDGYYAMVGQVHGGLMGVIQRAMVKACPHVWFERSEVKDRHLVAKRLTEHVQDKSKLPILIFPEGTCINNTSVMMFKKGSFEIGATVYPVAIKYDPQFGDAFWNSSKYGMVTYLLRMMTSWAIVCSVWYLPPMTREADEDAVQFANRVKSAIARQGGLVDLLWDGGLKREKVKDTFKEEQQKLYSKMIVGNHKDRSRS.

The N-terminal stretch at 1–37 (MFLLLPFDSLIVNLLGISLTVLFTLLLVFIIVPAIFG) is a signal peptide. The next 2 helical transmembrane spans lie at 156-176 (ISLR…CFLL) and 180-200 (IALA…VGYL). Asparagine 247 is a glycosylation site (N-linked (GlcNAc...) asparagine). The HXXXXD motif signature appears at 248 to 253 (HTSPID). Residues asparagine 327, asparagine 328, and asparagine 362 are each glycosylated (N-linked (GlcNAc...) asparagine).

Belongs to the 1-acyl-sn-glycerol-3-phosphate acyltransferase family. Ubiquitous. High levels in testis. Relatively high level of expression in skeletal muscle and heart. Relatively low level of expression in lung.

It localises to the endoplasmic reticulum membrane. It catalyses the reaction sn-glycerol 3-phosphate + an acyl-CoA = a 1-acyl-sn-glycero-3-phosphate + CoA. The enzyme catalyses dodecanoyl-CoA + sn-glycerol 3-phosphate = 1-dodecanoyl-sn-glycerol 3-phosphate + CoA. It carries out the reaction sn-glycerol 3-phosphate + hexadecanoyl-CoA = 1-hexadecanoyl-sn-glycero-3-phosphate + CoA. The catalysed reaction is sn-glycerol 3-phosphate + octadecanoyl-CoA = 1-octadecanoyl-sn-glycero-3-phosphate + CoA. It catalyses the reaction sn-glycerol 3-phosphate + (9Z)-octadecenoyl-CoA = 1-(9Z-octadecenoyl)-sn-glycero-3-phosphate + CoA. The enzyme catalyses (9Z,12Z)-octadecadienoyl-CoA + sn-glycerol 3-phosphate = 1-(9Z,12Z)-octadecadienoyl-sn-glycero-3-phosphate + CoA. The protein operates within phospholipid metabolism; CDP-diacylglycerol biosynthesis; CDP-diacylglycerol from sn-glycerol 3-phosphate: step 1/3. Inhibited by N-ethylmaleimide (NEM). Converts glycerol-3-phosphate to 1-acyl-sn-glycerol-3-phosphate (lysophosphatidic acid or LPA) by incorporating an acyl moiety at the sn-1 position of the glycerol backbone. Active against both saturated and unsaturated long-chain fatty acyl-CoAs. Protects cells against lipotoxicity. This chain is Glycerol-3-phosphate acyltransferase 4, found in Homo sapiens (Human).